A 594-amino-acid polypeptide reads, in one-letter code: A-type ATP synthase subunit A (594 aa).

236–243 (GPFGSGKT) provides a ligand contact to ATP.

This sequence belongs to the ATPase alpha/beta chains family. In terms of assembly, has multiple subunits with at least A(3), B(3), C, D, E, F, H, I and proteolipid K(x).

Its subcellular location is the cell membrane. It carries out the reaction ATP + H2O + 4 H(+)(in) = ADP + phosphate + 5 H(+)(out). Functionally, component of the A-type ATP synthase that produces ATP from ADP in the presence of a proton gradient across the membrane. The A chain is the catalytic subunit. The chain is A-type ATP synthase subunit A from Pyrobaculum calidifontis (strain DSM 21063 / JCM 11548 / VA1).